The chain runs to 103 residues: OMEGA-ectatommitoxin(02)-Rm1d (103 aa).

The N-terminal stretch at 1-30 (MKDSYISIVIAYLMVTFILVSSMPIEGEKR) is a signal peptide. Cystine bridges form between C39-C54, C49-C70, and C72-C81. The EGF-like domain occupies 43–82 (LNDENYCFNGKCVHLVAQDEPGKPYYSCICDEFYIGERCG).

The protein belongs to the EGF domain peptide family. Expressed by the venom gland.

It localises to the secreted. Ant peptide with probable defensive activity which acts as a potent agonist of the mammalian epidermal growth factor receptor (EGFR). Mimics, both structurally and functionally, vertebrate epidermal growth factor (EGF) peptide hormones. In vivo, intraplantar injection in mice causes long-lasting (several days) hypersensitivity of the injected paw to both mechanical and thermal stimuli. Its long-lasting effect is unusual for venom toxins whose effects are usually immediate. One possible explanation is that it would reduce the duration of a nest attack, discourage future attacks, or enhance the actions of subsequent exposure to other pain-inducing venom peptides. The protein is OMEGA-ectatommitoxin(02)-Rm1d of Rhytidoponera metallica (Australian green-headed ant).